The primary structure comprises 95 residues: Cystatin-A2 (95 aa).

The Secondary area of contact signature appears at 47 to 51; the sequence is QLVNG.

It belongs to the cystatin family.

It localises to the cytoplasm. Its function is as follows. Intracellular thiol proteinase inhibitor. Inhibits cathepsin B, but not papain. The chain is Cystatin-A2 (cpiB) from Dictyostelium discoideum (Social amoeba).